The chain runs to 264 residues: Undecaprenyl-diphosphatase (264 aa).

Helical transmembrane passes span 41–61 (NLAF…VILW), 82–102 (YVIN…FFKD), 106–126 (AIFG…AALL), 140–160 (ISMK…LPGL), 213–233 (IPAL…CLAC), and 244–264 (KLIY…ITQL).

Belongs to the UppP family.

The protein localises to the cell inner membrane. It catalyses the reaction di-trans,octa-cis-undecaprenyl diphosphate + H2O = di-trans,octa-cis-undecaprenyl phosphate + phosphate + H(+). Its function is as follows. Catalyzes the dephosphorylation of undecaprenyl diphosphate (UPP). Confers resistance to bacitracin. The polypeptide is Undecaprenyl-diphosphatase (Bacteroides thetaiotaomicron (strain ATCC 29148 / DSM 2079 / JCM 5827 / CCUG 10774 / NCTC 10582 / VPI-5482 / E50)).